A 179-amino-acid chain; its full sequence is Gamma-glutamyl cyclotransferase verK (179 aa).

Belongs to the class-I pyridoxal-phosphate-dependent aminotransferase family.

It carries out the reaction an alpha-(gamma-L-glutamyl)-L-amino acid = 5-oxo-L-proline + an L-alpha-amino acid. It functions in the pathway mycotoxin biosynthesis. Functionally, gamma-glutamyl cyclotransferase; part of the gene cluster that mediates the biosynthesis of 11'-deoxyverticillin A, one of the dimeric epipolythiodioxopiperazines (ETPs) from the verticillin family that act as mycotoxins. 11'-deoxyverticillin A is required for normal conidiation. The nonribosomal peptide synthetase verP is speculated to be responsible for condensation of amino acids to form the carbon skeleton of verticillin, whereas the cluster-specific tailoring enzymes are involved in further modifications leading to the production of 11'-deoxyverticillin A. The protein is Gamma-glutamyl cyclotransferase verK of Clonostachys rogersoniana.